The chain runs to 441 residues: COBRA-like protein 2 (441 aa).

Residues 1–28 (MNILFSRFSFLLLFLCSWTSFTFTTTEA) form the signal peptide. Asn37, Asn162, Asn170, Asn209, Asn234, Asn249, Asn314, Asn329, and Asn348 each carry an N-linked (GlcNAc...) asparagine glycan. Asn417 carries GPI-anchor amidated asparagine lipidation. Positions 418–441 (ASPNIATSPFVILLITFLSVLILM) are cleaved as a propeptide — removed in mature form.

The protein belongs to the COBRA family. Expressed in roots, stems, leaves, flowers and siliques.

It localises to the cell membrane. The chain is COBRA-like protein 2 (COBL2) from Arabidopsis thaliana (Mouse-ear cress).